The chain runs to 698 residues: Polyribonucleotide nucleotidyltransferase (698 aa).

Mg(2+) contacts are provided by Asp-490 and Asp-496. The KH domain occupies 557-616 (PKVVTMTIKPDKIRDVIGPGGKKINEIIDETGVKLDIEQDGTIFIGAVDQAMINRAREII). The 69-residue stretch at 626-694 (GQTYQATVKR…KQGRVNASHR (69 aa)) folds into the S1 motif domain.

Belongs to the polyribonucleotide nucleotidyltransferase family. Requires Mg(2+) as cofactor.

Its subcellular location is the cytoplasm. The catalysed reaction is RNA(n+1) + phosphate = RNA(n) + a ribonucleoside 5'-diphosphate. In terms of biological role, involved in mRNA degradation. Catalyzes the phosphorolysis of single-stranded polyribonucleotides processively in the 3'- to 5'-direction. The chain is Polyribonucleotide nucleotidyltransferase from Staphylococcus aureus (strain Mu3 / ATCC 700698).